The following is a 426-amino-acid chain: Arrestin domain-containing protein 17 (426 aa).

Polar residues predominate over residues 320 to 329 (QSAGNGSLPK). The tract at residues 320 to 340 (QSAGNGSLPKSSIKDSPPKWD) is disordered. Basic and acidic residues predominate over residues 331-340 (SIKDSPPKWD).

It belongs to the arrestin family. In terms of assembly, interacts with tax-6. Phosphorylated. Dephosphorylated by tax-6 in vitro. Expressed from the comma stage to adulthood in the nervous system, including sensory neurons and interneurons posterior to the nerve ring, dorsal and ventral nerve cords, tail ganglia and, CEP, HSN, ASK, ADL, ASH and ASJ neurons.

Functionally, involved in several behavioral responses including chemotaxis towards lysine and adaptation to repeated osmotic stress. In addition, plays a role in resuming egg-laying and locomotion after starvation. The sequence is that of Arrestin domain-containing protein 17 from Caenorhabditis elegans.